A 598-amino-acid chain; its full sequence is Arginine--tRNA ligase (598 aa).

The short motif at 131–141 is the 'HIGH' region element; sequence ANPTGPMHVGH. The segment at 288–309 is disordered; the sequence is KLPPPKSKKGQPPPQPQPDEEG.

Belongs to the class-I aminoacyl-tRNA synthetase family. Monomer.

Its subcellular location is the cytoplasm. The catalysed reaction is tRNA(Arg) + L-arginine + ATP = L-arginyl-tRNA(Arg) + AMP + diphosphate. In Anaeromyxobacter dehalogenans (strain 2CP-1 / ATCC BAA-258), this protein is Arginine--tRNA ligase.